A 310-amino-acid polypeptide reads, in one-letter code: Malate dehydrogenase (310 aa).

NAD(+) is bound by residues G7 to G13 and D34. R81 and R87 together coordinate substrate. Residues N94 and I117–N119 contribute to the NAD(+) site. N119 and R153 together coordinate substrate. H177 serves as the catalytic Proton acceptor. NAD(+) is bound at residue M227.

It belongs to the LDH/MDH superfamily. MDH type 1 family. In terms of assembly, homodimer.

The enzyme catalyses (S)-malate + NAD(+) = oxaloacetate + NADH + H(+). Catalyzes the reversible oxidation of malate to oxaloacetate. This chain is Malate dehydrogenase, found in Pseudoalteromonas translucida (strain TAC 125).